The chain runs to 398 residues: Nicotinate phosphoribosyltransferase (398 aa).

Residue His-222 is modified to Phosphohistidine; by autocatalysis.

It belongs to the NAPRTase family. Post-translationally, transiently phosphorylated on a His residue during the reaction cycle. Phosphorylation strongly increases the affinity for substrates and increases the rate of nicotinate D-ribonucleotide production. Dephosphorylation regenerates the low-affinity form of the enzyme, leading to product release.

The enzyme catalyses nicotinate + 5-phospho-alpha-D-ribose 1-diphosphate + ATP + H2O = nicotinate beta-D-ribonucleotide + ADP + phosphate + diphosphate. The protein operates within cofactor biosynthesis; NAD(+) biosynthesis; nicotinate D-ribonucleotide from nicotinate: step 1/1. Functionally, catalyzes the synthesis of beta-nicotinate D-ribonucleotide from nicotinate and 5-phospho-D-ribose 1-phosphate at the expense of ATP. This is Nicotinate phosphoribosyltransferase from Acidovorax ebreus (strain TPSY) (Diaphorobacter sp. (strain TPSY)).